We begin with the raw amino-acid sequence, 219 residues long: Cytidylate kinase (219 aa).

10–18 (GPAAAGKST) is an ATP binding site.

This sequence belongs to the cytidylate kinase family. Type 1 subfamily.

The protein resides in the cytoplasm. The catalysed reaction is CMP + ATP = CDP + ADP. It carries out the reaction dCMP + ATP = dCDP + ADP. The protein is Cytidylate kinase of Staphylococcus aureus (strain bovine RF122 / ET3-1).